The sequence spans 89 residues: Small ribosomal subunit protein uS15 (89 aa).

Residues 1–21 (MSVDAETKTKIIKDNARDKND) show a composition bias toward basic and acidic residues. A disordered region spans residues 1–26 (MSVDAETKTKIIKDNARDKNDTGSPE).

It belongs to the universal ribosomal protein uS15 family. As to quaternary structure, part of the 30S ribosomal subunit. Forms a bridge to the 50S subunit in the 70S ribosome, contacting the 23S rRNA.

Its function is as follows. One of the primary rRNA binding proteins, it binds directly to 16S rRNA where it helps nucleate assembly of the platform of the 30S subunit by binding and bridging several RNA helices of the 16S rRNA. Functionally, forms an intersubunit bridge (bridge B4) with the 23S rRNA of the 50S subunit in the ribosome. The chain is Small ribosomal subunit protein uS15 from Erythrobacter litoralis (strain HTCC2594).